We begin with the raw amino-acid sequence, 161 residues long: Globin CTT-VIIB-6 (161 aa).

An N-terminal signal peptide occupies residues 1 to 16; sequence MKFFAVLALCIVGAIA. The Globin domain maps to 18 to 161; it reads PLTADEASLV…NTFAIVVPRL (144 aa). Positions 76 and 111 each coordinate heme b.

It belongs to the globin family. In terms of assembly, homodimer.

In Chironomus thummi thummi (Midge), this protein is Globin CTT-VIIB-6 (CTT-7B6).